The sequence spans 428 residues: Histidine--tRNA ligase (428 aa).

Belongs to the class-II aminoacyl-tRNA synthetase family. In terms of assembly, homodimer.

The protein resides in the cytoplasm. It carries out the reaction tRNA(His) + L-histidine + ATP = L-histidyl-tRNA(His) + AMP + diphosphate + H(+). This is Histidine--tRNA ligase from Halalkalibacterium halodurans (strain ATCC BAA-125 / DSM 18197 / FERM 7344 / JCM 9153 / C-125) (Bacillus halodurans).